Reading from the N-terminus, the 405-residue chain is Acetate kinase (405 aa).

Mg(2+) is bound at residue asparagine 7. Lysine 14 serves as a coordination point for ATP. A substrate-binding site is contributed by arginine 99. Aspartate 156 serves as the catalytic Proton donor/acceptor. An ATP-binding site is contributed by 215–219 (HLGNG). Residue glutamate 391 coordinates Mg(2+).

It belongs to the acetokinase family. In terms of assembly, homodimer. Requires Mg(2+) as cofactor. Mn(2+) serves as cofactor.

The protein localises to the cytoplasm. It catalyses the reaction acetate + ATP = acetyl phosphate + ADP. It participates in metabolic intermediate biosynthesis; acetyl-CoA biosynthesis; acetyl-CoA from acetate: step 1/2. In terms of biological role, catalyzes the formation of acetyl phosphate from acetate and ATP. Can also catalyze the reverse reaction. The protein is Acetate kinase of Trichormus variabilis (strain ATCC 29413 / PCC 7937) (Anabaena variabilis).